The primary structure comprises 192 residues: Fe/S biogenesis protein NfuA (192 aa).

[4Fe-4S] cluster is bound by residues Cys-149 and Cys-152.

Belongs to the NfuA family. As to quaternary structure, homodimer. The cofactor is [4Fe-4S] cluster.

Functionally, involved in iron-sulfur cluster biogenesis. Binds a 4Fe-4S cluster, can transfer this cluster to apoproteins, and thereby intervenes in the maturation of Fe/S proteins. Could also act as a scaffold/chaperone for damaged Fe/S proteins. This chain is Fe/S biogenesis protein NfuA, found in Shewanella sp. (strain MR-7).